The sequence spans 137 residues: Small ribosomal subunit protein uS12 (137 aa).

Residues 1–55 (MPTINQLVRKPRKSKVEKSDSPALNKGYNSFKKTQTNVNSPQKRGVCTRVGTMTP) form a disordered region. Positions 27-42 (GYNSFKKTQTNVNSPQ) are enriched in polar residues. Aspartate 102 bears the 3-methylthioaspartic acid mark.

It belongs to the universal ribosomal protein uS12 family. As to quaternary structure, part of the 30S ribosomal subunit. Contacts proteins S8 and S17. May interact with IF1 in the 30S initiation complex.

Its function is as follows. With S4 and S5 plays an important role in translational accuracy. In terms of biological role, interacts with and stabilizes bases of the 16S rRNA that are involved in tRNA selection in the A site and with the mRNA backbone. Located at the interface of the 30S and 50S subunits, it traverses the body of the 30S subunit contacting proteins on the other side and probably holding the rRNA structure together. The combined cluster of proteins S8, S12 and S17 appears to hold together the shoulder and platform of the 30S subunit. In Enterococcus faecalis (strain ATCC 700802 / V583), this protein is Small ribosomal subunit protein uS12.